The primary structure comprises 654 residues: DNA ligase (654 aa).

NAD(+)-binding positions include 32–36 (DAVYD) and 81–82 (SL). The active-site N6-AMP-lysine intermediate is the Lys112. NAD(+) is bound by residues Arg133, Glu167, and Lys306. Residues Cys400, Cys403, Cys416, and Cys421 each contribute to the Zn(2+) site. The BRCT domain maps to 577-654 (ESSSIFSHKT…EEELLKYLKE (78 aa)).

This sequence belongs to the NAD-dependent DNA ligase family. LigA subfamily. Requires Mg(2+) as cofactor. Mn(2+) serves as cofactor.

The catalysed reaction is NAD(+) + (deoxyribonucleotide)n-3'-hydroxyl + 5'-phospho-(deoxyribonucleotide)m = (deoxyribonucleotide)n+m + AMP + beta-nicotinamide D-nucleotide.. In terms of biological role, DNA ligase that catalyzes the formation of phosphodiester linkages between 5'-phosphoryl and 3'-hydroxyl groups in double-stranded DNA using NAD as a coenzyme and as the energy source for the reaction. It is essential for DNA replication and repair of damaged DNA. In Helicobacter acinonychis (strain Sheeba), this protein is DNA ligase.